The sequence spans 178 residues: Large ribosomal subunit protein uL6 (178 aa).

The protein belongs to the universal ribosomal protein uL6 family. In terms of assembly, part of the 50S ribosomal subunit.

Its function is as follows. This protein binds to the 23S rRNA, and is important in its secondary structure. It is located near the subunit interface in the base of the L7/L12 stalk, and near the tRNA binding site of the peptidyltransferase center. The polypeptide is Large ribosomal subunit protein uL6 (Helicobacter acinonychis (strain Sheeba)).